Reading from the N-terminus, the 964-residue chain is Glycine dehydrogenase (decarboxylating) (964 aa).

The span at 1-11 (MNSTLQNQTKT) shows a compositional bias: polar residues. A disordered region spans residues 1-21 (MNSTLQNQTKTNLEKVGTDPL). At lysine 713 the chain carries N6-(pyridoxal phosphate)lysine.

Belongs to the GcvP family. The glycine cleavage system is composed of four proteins: P, T, L and H. It depends on pyridoxal 5'-phosphate as a cofactor.

The enzyme catalyses N(6)-[(R)-lipoyl]-L-lysyl-[glycine-cleavage complex H protein] + glycine + H(+) = N(6)-[(R)-S(8)-aminomethyldihydrolipoyl]-L-lysyl-[glycine-cleavage complex H protein] + CO2. In terms of biological role, the glycine cleavage system catalyzes the degradation of glycine. The P protein binds the alpha-amino group of glycine through its pyridoxal phosphate cofactor; CO(2) is released and the remaining methylamine moiety is then transferred to the lipoamide cofactor of the H protein. In Leptospira interrogans serogroup Icterohaemorrhagiae serovar copenhageni (strain Fiocruz L1-130), this protein is Glycine dehydrogenase (decarboxylating).